Reading from the N-terminus, the 236-residue chain is Proteasome subunit beta type-1 (236 aa).

The protein belongs to the peptidase T1B family. The 26S proteasome consists of a 20S proteasome core and two 19S regulatory subunits. The 20S proteasome core is composed of 28 subunits that are arranged in four stacked rings, resulting in a barrel-shaped structure. The two end rings are each formed by seven alpha subunits, and the two central rings are each formed by seven beta subunits. The catalytic chamber with the active sites is on the inside of the barrel.

It is found in the cytoplasm. The protein resides in the nucleus. In terms of biological role, non-catalytic component of the proteasome, a multicatalytic proteinase complex which is characterized by its ability to cleave peptides with Arg, Phe, Tyr, Leu, and Glu adjacent to the leaving group at neutral or slightly basic pH. The proteasome has an ATP-dependent proteolytic activity. This Dictyostelium discoideum (Social amoeba) protein is Proteasome subunit beta type-1 (psmB1).